A 407-amino-acid polypeptide reads, in one-letter code: 12S rRNA N(4)-cytidine methyltransferase METTL15 (407 aa).

S-adenosyl-L-methionine contacts are provided by residues 100 to 102, Asp-119, Phe-146, Asp-169, and Gln-176; that span reads GGH. Ser-358 is subject to Phosphoserine.

Belongs to the methyltransferase superfamily. RsmH family.

It is found in the mitochondrion matrix. It catalyses the reaction cytidine(839) in 12S rRNA + S-adenosyl-L-methionine = N(4)-methylcytidine(839) in 12S rRNA + S-adenosyl-L-homocysteine + H(+). Functionally, N4-methylcytidine (m4C) methyltransferase responsible for the methylation of position C839 in mitochondrial 12S rRNA. Involved in the stabilization of 12S rRNA folding, therefore facilitating the assembly of the mitochondrial small ribosomal subunits. This is 12S rRNA N(4)-cytidine methyltransferase METTL15 (METTL15) from Pongo abelii (Sumatran orangutan).